The primary structure comprises 489 residues: METENIHSFDVSLFSSCRVLVVGDMMIDEYLWGEVSRISPEAPVQVVEVKKTTSTLGGAGNVVNNLTALGAKVSVAGVMGGGKAGDLLNGKLTALGVNTEGLLVDQGRATTRKTRVIGANQQMLRIDRESKQEISEEQVQAIVRFAQNQIPQCDLVIASDYGKGVLTRSLMEELAKICKTAGKALIVDPKGMDYSKYKGATCITPNKKEASQASGVEIKDQASLERAAAKLLEIAGAEKILITLGKDGMALFSPGEEPFRVHAQARQVFDVSGAGDTVISVLGLSLAAGASYKTAAALANTAAGIVVAKVGTATVDQAELKAQLQDQPIAYQAKLKPLQELKSALENLRRQGKKIILTNGCFDLLHEGHINLLEQSRKLGDVLVVAVDDDESVRMVKGQGRPIIRERERVKIISAMTGVDFVTVFSTNQLDELIRAVKPDILTKGGNYKPDQVLGHEIVEELGGRIVLIPDASDVSSTRIIQDIRNGRG.

The ribokinase stretch occupies residues Met-1 to Pro-328. ATP is bound at residue Asn-206–Glu-209. Residue Asp-276 is part of the active site. The segment at Leu-357–Gly-489 is cytidylyltransferase.

In the N-terminal section; belongs to the carbohydrate kinase PfkB family. The protein in the C-terminal section; belongs to the cytidylyltransferase family. As to quaternary structure, homodimer.

The catalysed reaction is D-glycero-beta-D-manno-heptose 7-phosphate + ATP = D-glycero-beta-D-manno-heptose 1,7-bisphosphate + ADP + H(+). It carries out the reaction D-glycero-beta-D-manno-heptose 1-phosphate + ATP + H(+) = ADP-D-glycero-beta-D-manno-heptose + diphosphate. It participates in nucleotide-sugar biosynthesis; ADP-L-glycero-beta-D-manno-heptose biosynthesis; ADP-L-glycero-beta-D-manno-heptose from D-glycero-beta-D-manno-heptose 7-phosphate: step 1/4. It functions in the pathway nucleotide-sugar biosynthesis; ADP-L-glycero-beta-D-manno-heptose biosynthesis; ADP-L-glycero-beta-D-manno-heptose from D-glycero-beta-D-manno-heptose 7-phosphate: step 3/4. Functionally, catalyzes the phosphorylation of D-glycero-D-manno-heptose 7-phosphate at the C-1 position to selectively form D-glycero-beta-D-manno-heptose-1,7-bisphosphate. In terms of biological role, catalyzes the ADP transfer from ATP to D-glycero-beta-D-manno-heptose 1-phosphate, yielding ADP-D-glycero-beta-D-manno-heptose. The sequence is that of Bifunctional protein HldE from Desulfatibacillum aliphaticivorans.